A 402-amino-acid chain; its full sequence is Major outer membrane porin (402 aa).

The N-terminal stretch at 1–22 is a signal peptide; that stretch reads MKKLLKSALLFAATGSALSLQA.

The protein belongs to the chlamydial porin (CP) (TC 1.B.2) family. As to quaternary structure, part of a disulfide cross-linked outer membrane complex (COMC) composed of the major outer membrane porin, the small cysteine-rich protein (OmcA) and the large cysteine-rich periplasmic protein (OmcB).

It localises to the cell outer membrane. Its function is as follows. In elementary bodies (EBs, the infectious stage, which is able to survive outside the host cell) provides the structural integrity of the outer envelope through disulfide cross-links with the small cysteine-rich protein and the large cysteine-rich periplasmic protein. It has been described in publications as the Sarkosyl-insoluble COMC (Chlamydia outer membrane complex), and serves as the functional equivalent of peptidoglycan. Permits diffusion of specific solutes through the outer membrane. This Chlamydia psittaci (Chlamydophila psittaci) protein is Major outer membrane porin (ompA).